A 430-amino-acid chain; its full sequence is Histidine--tRNA ligase (430 aa).

It belongs to the class-II aminoacyl-tRNA synthetase family. In terms of assembly, homodimer.

The protein resides in the cytoplasm. The enzyme catalyses tRNA(His) + L-histidine + ATP = L-histidyl-tRNA(His) + AMP + diphosphate + H(+). This is Histidine--tRNA ligase from Chlorobaculum parvum (strain DSM 263 / NCIMB 8327) (Chlorobium vibrioforme subsp. thiosulfatophilum).